Reading from the N-terminus, the 148-residue chain is MKVIFTQDVKGKGKKGEVKDVPVGYANNFLLKKNMAVEATPGNLRQLEQKNKAAEAERQQEIEDAKKLKEQLSEIEVEVSAKTGEGGKLFGSVSTKQITQALQQQHDIKIDKRKMDLPNGIHALGYTNVPVKLDKEVEGTIRVHTVEQ.

The protein belongs to the bacterial ribosomal protein bL9 family.

Binds to the 23S rRNA. The polypeptide is Large ribosomal subunit protein bL9 (Staphylococcus saprophyticus subsp. saprophyticus (strain ATCC 15305 / DSM 20229 / NCIMB 8711 / NCTC 7292 / S-41)).